A 453-amino-acid chain; its full sequence is Zinc finger protein Pegasus (453 aa).

3 consecutive C2H2-type zinc fingers follow at residues 101-123 (LKCRYCNYASKGTARLIEHIRIH), 129-151 (HRCHLCPFASAYERHLEAHMRSH), and 157-180 (YKCELCSFRCSDRSNLSHHRRRKH). The span at 279–293 (GQLSSLPPDTQNPAS) shows a compositional bias: polar residues. The disordered stretch occupies residues 279-375 (GQLSSLPPDT…QPSTPAPALP (97 aa)). A compositionally biased stretch (low complexity) spans 315 to 332 (CSSAVSTSVAQSSSPASP). Residues 356–368 (RTSTPSISNSQPS) are compositionally biased toward polar residues. C2H2-type zinc fingers lie at residues 383–405 (HHCQHCDMYFADNILYTIHMGCH) and 411–438 (FQCNICGCKCKNKYDFACHFARGACCQH).

The protein belongs to the Ikaros C2H2-type zinc-finger protein family. In terms of assembly, probably self-associates.

The protein resides in the nucleus. Transcriptional repressor that binds the core 5'GNNTGTNG-3' DNA consensus sequence. The sequence is that of Zinc finger protein Pegasus (ikzf5) from Xenopus laevis (African clawed frog).